The following is a 124-amino-acid chain: MIPGEVIPANGEVVLNKGRRMVKVLVAHTGDRPIQVGSHFHFAEVNRSLHFDRQEAFGMRLNIAAGTAVRFEPGEEKEVDLVEIGGKRQIYGLNGWTDGAIDDENLPSFLASYQVSEDKEDEEK.

Belongs to the urease beta subunit family. In terms of assembly, heterotrimer of UreA (gamma), UreB (beta) and UreC (alpha) subunits. Three heterotrimers associate to form the active enzyme.

Its subcellular location is the cytoplasm. It catalyses the reaction urea + 2 H2O + H(+) = hydrogencarbonate + 2 NH4(+). It functions in the pathway nitrogen metabolism; urea degradation; CO(2) and NH(3) from urea (urease route): step 1/1. The chain is Urease subunit beta from Halalkalibacterium halodurans (strain ATCC BAA-125 / DSM 18197 / FERM 7344 / JCM 9153 / C-125) (Bacillus halodurans).